The primary structure comprises 861 residues: DNA mismatch repair protein MutS (861 aa).

617-624 (GPNMGGKS) lines the ATP pocket. A disordered region spans residues 799–822 (ETTSLPHEQPPAAKAKDAPQVPHQ). Low complexity predominate over residues 808 to 820 (PPAAKAKDAPQVP).

This sequence belongs to the DNA mismatch repair MutS family.

In terms of biological role, this protein is involved in the repair of mismatches in DNA. It is possible that it carries out the mismatch recognition step. This protein has a weak ATPase activity. The sequence is that of DNA mismatch repair protein MutS from Pseudomonas putida (strain GB-1).